Reading from the N-terminus, the 145-residue chain is 6-pyruvoyl tetrahydrobiopterin synthase (145 aa).

A Phosphoserine modification is found at serine 19. Histidine 24 is a binding site for Zn(2+). Serine 28 is subject to Phosphoserine. Cysteine 43 acts as the Proton acceptor in catalysis. Residues histidine 49 and histidine 51 each coordinate Zn(2+). Histidine 90 serves as the catalytic Charge relay system. Position 128 is a phosphotyrosine (tyrosine 128). Glutamate 134 functions as the Charge relay system in the catalytic mechanism.

This sequence belongs to the PTPS family. In terms of assembly, homohexamer formed of two homotrimers in a head to head fashion. Requires Zn(2+) as cofactor. Phosphorylation of Ser-19 is required for maximal enzyme activity.

It catalyses the reaction 7,8-dihydroneopterin 3'-triphosphate = 6-pyruvoyl-5,6,7,8-tetrahydropterin + triphosphate + H(+). It functions in the pathway cofactor biosynthesis; tetrahydrobiopterin biosynthesis; tetrahydrobiopterin from 7,8-dihydroneopterin triphosphate: step 1/3. In terms of biological role, involved in the biosynthesis of tetrahydrobiopterin, an essential cofactor of aromatic amino acid hydroxylases. Catalyzes the transformation of 7,8-dihydroneopterin triphosphate into 6-pyruvoyl tetrahydropterin. The chain is 6-pyruvoyl tetrahydrobiopterin synthase (PTS) from Pongo abelii (Sumatran orangutan).